The chain runs to 144 residues: Peptide methionine sulfoxide reductase MsrB (144 aa).

The span at M1–L12 shows a compositional bias: basic and acidic residues. The segment at M1–T25 is disordered. The MsrB domain maps to Q5 to V128. The active-site Nucleophile is the C117.

This sequence belongs to the MsrB Met sulfoxide reductase family.

The enzyme catalyses L-methionyl-[protein] + [thioredoxin]-disulfide + H2O = L-methionyl-(R)-S-oxide-[protein] + [thioredoxin]-dithiol. This is Peptide methionine sulfoxide reductase MsrB from Lactiplantibacillus plantarum (strain ATCC BAA-793 / NCIMB 8826 / WCFS1) (Lactobacillus plantarum).